The primary structure comprises 341 residues: Short chain dehydrogenase virL (341 aa).

NADP(+)-binding residues include Leu49, Lys74, Asp97, Asn123, Tyr210, and Lys214. The Proton donor role is filled by Tyr210. Lys214 functions as the Lowers pKa of active site Tyr in the catalytic mechanism.

It belongs to the short-chain dehydrogenases/reductases (SDR) family.

Its pathway is secondary metabolite biosynthesis. In terms of biological role, short chain dehydrogenase; part of the gene cluster that mediates the biosynthesis of virensols and trichoxide, fungal natural products that contain or are derived from a salicylaldehyde core. The pathway begins with the synthesis of the reduced chain in virensol C by the highly reducing polyketide synthase virA via condensation of one acetate and 8 malonate units. VirA has interesting programming rules since the first 2 ketides are fully reduced, the 3 following ketides undergo beta-dehydration, and the last 3 ketides are only reduced to beta-hydroxys to yield the trihydroxy portion. The production of aldehyde virensol C by virA alone is surprising, since virA does not contain a reductase (R) domain that is typically associated with reductive product release in HRPKS. The cupin-domain enzyme virC is involved in enhancing virA product turnover. The short-chain dehydrogenase virB then oxidizes the C-7 alcohol of virensol C to a ketone, yielding virensol D. Virensol D is further transformed to salicylaldehyde 5-deoxyaurocitrin by the short-chain dehydrogenase virD. VirD catalyzes the dehydrogenation of C-3 to form the beta-ketone aldehyde, which is followed by the generation of the nucleophilic C-2 that is required for the intramolecular aldol condensation between C-2 and C-7, itself followed by dehydration and aromatization which leads to salicylaldehyde 5-deoxyaurocitrin. While the dehydrogenation of virensol D is definitely catalyzed by virD, the aldol condensation and dehydration may be uncatalyzed or assisted by virD. The short chain dehydrogenase virG then converts salicylaldehyde 5-deoxyaurocitrin into virensol B which is further hydroxylated by the cytochrome P450 monooxygenase virE to yield the hydroquinone virensol A. VirI then may oxidize virensol A to form the quinone, while virH performs the epoxidation. Finally, the two remaining short-chain dehydrogenases, virK and virL, are probably responsible for reducing the ketones to the corresponding alcohols to furnish the epoxycyclohexanol structure in trichoxide. In Hypocrea virens (strain Gv29-8 / FGSC 10586) (Gliocladium virens), this protein is Short chain dehydrogenase virL.